We begin with the raw amino-acid sequence, 431 residues long: Enolase (431 aa).

Gln167 contacts (2R)-2-phosphoglycerate. Catalysis depends on Glu209, which acts as the Proton donor. The Mg(2+) site is built by Asp246, Glu289, and Asp316. Residues Lys341, Arg370, Ser371, and Lys392 each contribute to the (2R)-2-phosphoglycerate site. Lys341 acts as the Proton acceptor in catalysis.

It belongs to the enolase family. In terms of assembly, component of the RNA degradosome, a multiprotein complex involved in RNA processing and mRNA degradation. Requires Mg(2+) as cofactor.

Its subcellular location is the cytoplasm. It is found in the secreted. It localises to the cell surface. It carries out the reaction (2R)-2-phosphoglycerate = phosphoenolpyruvate + H2O. It functions in the pathway carbohydrate degradation; glycolysis; pyruvate from D-glyceraldehyde 3-phosphate: step 4/5. Its function is as follows. Catalyzes the reversible conversion of 2-phosphoglycerate (2-PG) into phosphoenolpyruvate (PEP). It is essential for the degradation of carbohydrates via glycolysis. This chain is Enolase, found in Shewanella woodyi (strain ATCC 51908 / MS32).